A 367-amino-acid polypeptide reads, in one-letter code: Glutamate 5-kinase (367 aa).

Lysine 10 is an ATP binding site. Residues serine 50, aspartate 137, and asparagine 149 each coordinate substrate. Residues 169 to 170 (TD) and 211 to 217 (TGGMSTK) contribute to the ATP site. The 79-residue stretch at 275 to 353 (AGEITVDEGA…QEIDAILGYE (79 aa)) folds into the PUA domain.

This sequence belongs to the glutamate 5-kinase family.

Its subcellular location is the cytoplasm. It catalyses the reaction L-glutamate + ATP = L-glutamyl 5-phosphate + ADP. It participates in amino-acid biosynthesis; L-proline biosynthesis; L-glutamate 5-semialdehyde from L-glutamate: step 1/2. In terms of biological role, catalyzes the transfer of a phosphate group to glutamate to form L-glutamate 5-phosphate. This chain is Glutamate 5-kinase, found in Escherichia coli O81 (strain ED1a).